The sequence spans 782 residues: Endonuclease MutS2 (782 aa).

336-343 (GPNTGGKT) lines the ATP pocket. In terms of domain architecture, Smr spans 707–782 (LDLRGYRYED…GFGVTVATLK (76 aa)).

The protein belongs to the DNA mismatch repair MutS family. MutS2 subfamily. Homodimer. Binds to stalled ribosomes, contacting rRNA.

Functionally, endonuclease that is involved in the suppression of homologous recombination and thus may have a key role in the control of bacterial genetic diversity. Its function is as follows. Acts as a ribosome collision sensor, splitting the ribosome into its 2 subunits. Detects stalled/collided 70S ribosomes which it binds and splits by an ATP-hydrolysis driven conformational change. Acts upstream of the ribosome quality control system (RQC), a ribosome-associated complex that mediates the extraction of incompletely synthesized nascent chains from stalled ribosomes and their subsequent degradation. Probably generates substrates for RQC. The protein is Endonuclease MutS2 of Staphylococcus aureus (strain MRSA252).